The primary structure comprises 293 residues: Cell division protein FtsQ (293 aa).

The Cytoplasmic portion of the chain corresponds to 1–29 (MSQVRSKSQQGKRQAKPQEVVPATILTEQ). The chain crosses the membrane as a helical span at residues 30–52 (LSTYAFGTVTAGAVMVAVAAWMG). The Periplasmic segment spans residues 53 to 293 (GSLASIDERI…SQIDDKSGGA (241 aa)). Residues 75–144 (FTVTKISIEG…NDIWILAENR (70 aa)) form the POTRA domain.

This sequence belongs to the FtsQ/DivIB family. FtsQ subfamily.

It is found in the cell inner membrane. Its function is as follows. Essential cell division protein. The protein is Cell division protein FtsQ of Hirschia baltica (strain ATCC 49814 / DSM 5838 / IFAM 1418).